The sequence spans 2148 residues: Polyketide synthase 1 (2148 aa).

The N-terminal acylcarrier protein transacylase domain (SAT) stretch occupies residues 19 to 261 (FIFGDQSSCN…TPLAVHAPYH (243 aa)). A Ketosynthase family 3 (KS3) domain is found at 394–829 (ESKIAIIGMS…GGNTALLVED (436 aa)). Catalysis depends on for beta-ketoacyl synthase activity residues Cys-566, His-701, and His-745. The interval 929-1233 (AFVFSGQGSQ…PSLMRNKDGW (305 aa)) is malonyl-CoA:ACP transacylase (MAT) domain. The For acyl/malonyl transferase activity role is filled by Ser-1018. The segment at 1310–1624 (TASVHRIVHE…RKVLNTAMPP (315 aa)) is product template (PT) domain. The N-terminal hotdog fold stretch occupies residues 1314–1447 (HRIVHESVEK…SSLHFEQPKV (134 aa)). The region spanning 1314-1619 (HRIVHESVEK…FQGIPRKVLN (306 aa)) is the PKS/mFAS DH domain. His-1346 acts as the Proton acceptor; for dehydratase activity in catalysis. A C-terminal hotdog fold region spans residues 1474–1619 (LNSRMSSGVI…FQGIPRKVLN (146 aa)). Asp-1533 serves as the catalytic Proton donor; for dehydratase activity. The segment at 1619–1655 (NTAMPPPKSQNEAPVRSGPAKPAVKPPRSASSEHSGH) is disordered. Residues 1678–1752 (RNPMLPVFKI…DLAAHLGMDT (75 aa)) enclose the Carrier 1 domain. An O-(pantetheine 4'-phosphoryl)serine modification is found at Ser-1712. The segment covering 1755–1790 (ADQSSGQSSSSGGLSPRSDSIGEMTSSATTPPSMSP) has biased composition (low complexity). The tract at residues 1755 to 1796 (ADQSSGQSSSSGGLSPRSDSIGEMTSSATTPPSMSPRGSVSG) is disordered. A Carrier 2 domain is found at 1793 to 1870 (SVSGSQCKDV…SFKHMFQQGH (78 aa)). At Ser-1830 the chain carries O-(pantetheine 4'-phosphoryl)serine. The thioesterase (TE) domain stretch occupies residues 1882-2146 (LKQYRATSTL…ERVAAFIRSI (265 aa)). Ser-1973 (for thioesterase activity) is an active-site residue.

In terms of biological role, polyketide synthase; part of the Pks1 gene cluster that mediates the biosynthesis of an anthraquinone derivative pigment that contributes to conidial pigmentation that provides protection from UV radiation, heat and cold stress. The polyketide synthase Pks1 produces 1-acetyl-2,4,6,8-tetrahydroxy-9,10-anthraquinone though condensation of acetyl-CoA with malonyl-CoA. The dehydratase EthD and the laccase Mlac1 further convert the anthraquinone derivative into the final conidial pigment. This is Polyketide synthase 1 from Metarhizium brunneum (strain ARSEF 3297).